Reading from the N-terminus, the 435-residue chain is Transcription activator ACTTR (435 aa).

Residues 16-43 constitute a DNA-binding region (zn(2)-C6 fungal-type); sequence CDFCTQSKLRCNKNKPSCRRCTIQQQPC. A disordered region spans residues 48–89; sequence ARRTGRPPKRPRKANDGQEANEQHGDQDPVTSTPGGSCQQQS. Residues 50 to 59 are compositionally biased toward basic residues; the sequence is RTGRPPKRPR. Positions 60–74 are enriched in basic and acidic residues; it reads KANDGQEANEQHGDQ. Over residues 76 to 89 the composition is skewed to polar residues; that stretch reads PVTSTPGGSCQQQS.

The protein resides in the nucleus. Its function is as follows. Transcription factor that regulates the expression of the gene clusters that mediate the biosynthesis of the host-selective toxins (HSTs) ACT-toxins responsible for brown spot of tangerine disease by the tangerine pathotype which affects tangerines and mandarins. ACT-toxins consist of three moieties, 9,10-epoxy-8-hydroxy-9-methyl-decatrienoic acid (EDA), valine and a polyketide. ACT-toxin I is toxic to both citrus and pear; toxin II the 5''-deoxy derivative of ACT-toxin I, is highly toxic to pear and slightly toxic to citrus. On cellular level, ACT-toxins affect plasma membrane of susceptible cells and cause a sudden increase in loss of K(+) after a few minutes of toxin treatment. The chain is Transcription activator ACTTR from Alternaria alternata (Alternaria rot fungus).